The primary structure comprises 164 residues: Choriogonadotropin subunit beta (164 aa).

The first 20 residues, 1-20 (MEMLQGLLLCLLLSTGGAWA), serve as a signal peptide directing secretion. Cystine bridges form between Cys-29–Cys-77, Cys-43–Cys-92, Cys-46–Cys-130, Cys-54–Cys-108, Cys-58–Cys-110, and Cys-113–Cys-120. Asn-50 carries an N-linked (GlcNAc...) asparagine glycan. The disordered stretch occupies residues 135-164 (FQDSSSKDPPRNLTSPSQLLEPADPPLVPQ). An O-linked (GalNAc...) serine glycan is attached at Ser-140. N-linked (GlcNAc...) asparagine glycosylation is present at Asn-146. Ser-151 is a glycosylation site (O-linked (GalNAc...) serine).

This sequence belongs to the glycoprotein hormones subunit beta family. Heterodimer of a common alpha chain and a unique beta chain which confers biological specificity to thyrotropin, lutropin, follitropin and gonadotropin. Placenta.

The protein localises to the secreted. Stimulates the ovaries to synthesize the steroids that are essential for the maintenance of pregnancy. The sequence is that of Choriogonadotropin subunit beta (CGB) from Callithrix jacchus (White-tufted-ear marmoset).